Consider the following 413-residue polypeptide: Serine hydroxymethyltransferase (413 aa).

Residues Leu119 and 123–125 (GHL) each bind (6S)-5,6,7,8-tetrahydrofolate. Lys228 is subject to N6-(pyridoxal phosphate)lysine. 351–353 (SPF) contacts (6S)-5,6,7,8-tetrahydrofolate.

It belongs to the SHMT family. Homodimer. Requires pyridoxal 5'-phosphate as cofactor.

It is found in the cytoplasm. The catalysed reaction is (6R)-5,10-methylene-5,6,7,8-tetrahydrofolate + glycine + H2O = (6S)-5,6,7,8-tetrahydrofolate + L-serine. Its pathway is one-carbon metabolism; tetrahydrofolate interconversion. It participates in amino-acid biosynthesis; glycine biosynthesis; glycine from L-serine: step 1/1. In terms of biological role, catalyzes the reversible interconversion of serine and glycine with tetrahydrofolate (THF) serving as the one-carbon carrier. This reaction serves as the major source of one-carbon groups required for the biosynthesis of purines, thymidylate, methionine, and other important biomolecules. Also exhibits THF-independent aldolase activity toward beta-hydroxyamino acids, producing glycine and aldehydes, via a retro-aldol mechanism. The sequence is that of Serine hydroxymethyltransferase from Clostridium botulinum (strain ATCC 19397 / Type A).